The sequence spans 310 residues: HPr kinase/phosphorylase (310 aa).

Catalysis depends on residues His138 and Lys159. 153–160 (GASGIGKS) is a binding site for ATP. Mg(2+) is bound at residue Ser160. Asp177 (proton acceptor; for phosphorylation activity. Proton donor; for dephosphorylation activity) is an active-site residue. The interval 201-210 (IEIRGVGIID) is important for the catalytic mechanism of both phosphorylation and dephosphorylation. Glu202 lines the Mg(2+) pocket. Residue Arg243 is part of the active site. The important for the catalytic mechanism of dephosphorylation stretch occupies residues 264 to 269 (PVKTGR).

Belongs to the HPrK/P family. Homohexamer. Mg(2+) serves as cofactor.

It carries out the reaction [HPr protein]-L-serine + ATP = [HPr protein]-O-phospho-L-serine + ADP + H(+). The enzyme catalyses [HPr protein]-O-phospho-L-serine + phosphate + H(+) = [HPr protein]-L-serine + diphosphate. Its function is as follows. Catalyzes the ATP- as well as the pyrophosphate-dependent phosphorylation of a specific serine residue in HPr, a phosphocarrier protein of the phosphoenolpyruvate-dependent sugar phosphotransferase system (PTS). HprK/P also catalyzes the pyrophosphate-producing, inorganic phosphate-dependent dephosphorylation (phosphorolysis) of seryl-phosphorylated HPr (P-Ser-HPr). The two antagonistic activities of HprK/P are regulated by several intracellular metabolites, which change their concentration in response to the absence or presence of rapidly metabolisable carbon sources (glucose, fructose, etc.) in the growth medium. Therefore, by controlling the phosphorylation state of HPr, HPrK/P is a sensor enzyme that plays a major role in the regulation of carbon metabolism and sugar transport: it mediates carbon catabolite repression (CCR), and regulates PTS-catalyzed carbohydrate uptake and inducer exclusion. The protein is HPr kinase/phosphorylase of Lactococcus lactis subsp. cremoris (strain MG1363).